Reading from the N-terminus, the 254-residue chain is DNA repair protein RecO (254 aa).

Belongs to the RecO family.

Functionally, involved in DNA repair and RecF pathway recombination. This chain is DNA repair protein RecO, found in Verminephrobacter eiseniae (strain EF01-2).